We begin with the raw amino-acid sequence, 461 residues long: Toxin CfTX-B (461 aa).

Residues 1 to 24 form the signal peptide; it reads MDPRISSRLRALALLVFVISITDG. A propeptide spanning residues 25–31 is cleaved from the precursor; it reads IPNRAKR.

It belongs to the jellyfish toxin family. Type II subfamily. Oligomer. In terms of processing, contains 2 disulfide bonds. Nematocytes.

Its subcellular location is the secreted. The protein resides in the nematocyst. It is found in the target cell membrane. Functionally, the fraction containing this toxin and CfTX-B shows potent hemolytic activity. This fraction causes minor effects on the cardiovascular system of anesthetized rats (at 25 ug/kg), since it has no significant effects on heart rate but produces relatively small increases in mean arterial pressure. This Chironex fleckeri (Australian box jellyfish) protein is Toxin CfTX-B.